A 255-amino-acid chain; its full sequence is Type III pantothenate kinase (255 aa).

12-19 (DIGNSYTK) lines the ATP pocket. Substrate is bound at residue 109-112 (GDDL). The Proton acceptor role is filled by D111. T133 is an ATP binding site. T185 provides a ligand contact to substrate.

Belongs to the type III pantothenate kinase family. Homodimer. Requires NH4(+) as cofactor. The cofactor is K(+).

The protein localises to the cytoplasm. The enzyme catalyses (R)-pantothenate + ATP = (R)-4'-phosphopantothenate + ADP + H(+). It participates in cofactor biosynthesis; coenzyme A biosynthesis; CoA from (R)-pantothenate: step 1/5. In terms of biological role, catalyzes the phosphorylation of pantothenate (Pan), the first step in CoA biosynthesis. The protein is Type III pantothenate kinase of Malacoplasma penetrans (strain HF-2) (Mycoplasma penetrans).